Consider the following 257-residue polypeptide: Photosystem I chlorophyll a/b-binding protein 2, chloroplastic (257 aa).

Residues 1–43 (MASSLCASSAIAAISSPSFLGGKKLRLKKKLTVPAVSRPDASV) constitute a chloroplast transit peptide. Tryptophan 55 contacts chlorophyll b. Positions 75, 81, and 94 each coordinate chlorophyll a. Residue arginine 99 participates in chlorophyll b binding. A run of 2 helical transmembrane segments spans residues 100–120 (WAMLGAAGIFIPEFLTKIGIL) and 133–153 (YFTDKTTLFVVELILIGWAEG). Residues glutamate 152 and arginine 155 each coordinate chlorophyll b. The chlorophyll a site is built by lysine 208, glutamate 209, asparagine 212, arginine 214, glutamine 226, and histidine 241. Residues 215–235 (LAMLAVMGAWFQHIYTGTGPI) form a helical membrane-spanning segment.

The protein belongs to the light-harvesting chlorophyll a/b-binding (LHC) protein family. In terms of assembly, the LHC complex consists of chlorophyll a-b binding proteins. Red-emitting heterodimers with LHCA3 and LHCA5. Binds to carotenoids. Requires Binds at least 14 chlorophylls (8 Chl-a and 6 Chl-b) and carotenoids such as lutein and neoxanthin. as cofactor. Photoregulated by reversible phosphorylation of its threonine residues.

The protein resides in the plastid. The protein localises to the chloroplast thylakoid membrane. The light-harvesting complex (LHC) functions as a light receptor, it captures and delivers excitation energy to photosystems with which it is closely associated, here photosystem I. The protein is Photosystem I chlorophyll a/b-binding protein 2, chloroplastic of Arabidopsis thaliana (Mouse-ear cress).